The chain runs to 213 residues: Orotate phosphoribosyltransferase (213 aa).

Lysine 26 is a binding site for 5-phospho-alpha-D-ribose 1-diphosphate. 34–35 (FF) serves as a coordination point for orotate. Residues 72–73 (YK), arginine 99, lysine 100, lysine 103, histidine 105, and 124–132 (DDVITAGTA) each bind 5-phospho-alpha-D-ribose 1-diphosphate. Orotate contacts are provided by threonine 128 and arginine 156.

The protein belongs to the purine/pyrimidine phosphoribosyltransferase family. PyrE subfamily. As to quaternary structure, homodimer. It depends on Mg(2+) as a cofactor.

The catalysed reaction is orotidine 5'-phosphate + diphosphate = orotate + 5-phospho-alpha-D-ribose 1-diphosphate. Its pathway is pyrimidine metabolism; UMP biosynthesis via de novo pathway; UMP from orotate: step 1/2. In terms of biological role, catalyzes the transfer of a ribosyl phosphate group from 5-phosphoribose 1-diphosphate to orotate, leading to the formation of orotidine monophosphate (OMP). In Klebsiella pneumoniae (strain 342), this protein is Orotate phosphoribosyltransferase.